The following is a 596-amino-acid chain: Sodium/mannose cotransporter SLC5A10 (596 aa).

Over 1 to 15 the chain is Extracellular; that stretch reads MAANSTSDLHTPGTQ. N-linked (GlcNAc...) asparagine glycosylation is present at Asn4. The chain crosses the membrane as a helical span at residues 16 to 36; it reads LSVADIIVITVYFALNVAVGI. Residues 37–72 are Cytoplasmic-facing; it reads WSSCRASRNTVNGYFLAGRDMTWWPIGASLFASSEG. A helical membrane pass occupies residues 73 to 93; the sequence is SGLFIGLAGSGAAGGLAVAGF. Residues 94–99 lie on the Extracellular side of the membrane; that stretch reads EWNATY. Asn96 is a glycosylation site (N-linked (GlcNAc...) asparagine). A helical transmembrane segment spans residues 100–120; it reads VLLALAWVFVPIYISSEIVTL. Residues 121-149 are Cytoplasmic-facing; the sequence is PEYIQKRYGGQRIRMYLSVLSLLLSVFTK. A phosphoserine mark is found at Ser141 and Ser145. Thr148 is modified (phosphothreonine). Residues 150-170 form a helical membrane-spanning segment; it reads ISLDLYAGALFVHICLGWNFY. Residues 171–173 are Extracellular-facing; sequence LST. A helical membrane pass occupies residues 174–194; the sequence is ILTLGITALYTIAGGLAAVIY. Residues 195-200 lie on the Cytoplasmic side of the membrane; the sequence is TDALQT. Residues 201–221 form a helical membrane-spanning segment; the sequence is LIMVVGAVILTIKAFDQIGGY. Residues 222–264 are Extracellular-facing; it reads GQLEAAYAQAIPSRTIANTTCHLPRTDAMHMFRDPHTGDLPWT. The chain crosses the membrane as a helical span at residues 265 to 285; sequence GMTFGLTIMATWYWCTDQVIV. The Cytoplasmic segment spans residues 286–300; it reads QRSLSARDLNHAKAG. The chain crosses the membrane as a helical span at residues 301–321; sequence SILASYLKMLPMGLIIMPGMI. The Extracellular portion of the chain corresponds to 322–355; sequence SRALFPDDVGCVVPSECLRACGAEVGCSNIAYPK. The chain crosses the membrane as a helical span at residues 356-376; it reads LVMELMPIGLRGLMIAVMLAA. At 377-409 the chain is on the cytoplasmic side; sequence LMSSLTSIFNSSSTLFTMDIWRRLRPRSGEREL. A helical transmembrane segment spans residues 410–430; it reads LLVGRLVIVALIGVSVAWIPV. Over 431-443 the chain is Extracellular; it reads LQDSNSGQLFIYM. A helical transmembrane segment spans residues 444 to 464; that stretch reads QSVTSSLAPPVTAVFVLGVFW. The Cytoplasmic segment spans residues 465 to 471; the sequence is RRANEQG. A helical membrane pass occupies residues 472–492; sequence AFWGLIAGLVVGATRLVLEFL. The Extracellular portion of the chain corresponds to 493 to 513; sequence NPAPPCGEPDTRPAVLGSIHY. A helical membrane pass occupies residues 514-534; that stretch reads LHFAVALFALSGAVVVAGSLL. The Cytoplasmic segment spans residues 535 to 575; the sequence is TPPPQSVQIENLTWWTLAQDVPLGTKAGDGQTPQKHAFWAR. The helical transmembrane segment at 576 to 596 threads the bilayer; that stretch reads VCGFNAILLMCVNIFFYAYFA.

It belongs to the sodium:solute symporter (SSF) (TC 2.A.21) family. In terms of tissue distribution, predominantly expressed at high levels in kidney. Very low expression is detected in testes. Expressed in kidney. As to expression, the most abundant isoform expressed in kidney.

It is found in the apical cell membrane. It catalyses the reaction D-mannose(out) + Na(+)(out) = D-mannose(in) + Na(+)(in). The catalysed reaction is D-fructopyranose(out) + Na(+)(out) = D-fructopyranose(in) + Na(+)(in). Inhibited by phlorizin. In terms of biological role, electrogenic Na+-coupled sugar symporter that actively transports D-mannose or D-fructose at the plasma membrane, with a Na+ to sugar coupling ratio of 1:1. Transporter activity is driven by a transmembrane Na+ electrochemical gradient set by the Na+/K+ pump. Exclusively recognizes sugar substrates having a pyranose ring with an axial hydroxyl group on carbon 2. Has likely evolved to enable renal reabsorption of D-mannose, an important constituent of oligosaccharide chains of glycoproteins. Contributes to dietary D-fructose reabsorption from glomerular filtrate across the brush border of the kidney. Appears to have no transporter activity. In Homo sapiens (Human), this protein is Sodium/mannose cotransporter SLC5A10 (SLC5A10).